A 379-amino-acid polypeptide reads, in one-letter code: Chorismate synthase (379 aa).

NADP(+) is bound by residues arginine 48 and arginine 54. FMN-binding positions include 125–127 (RSS), 241–242 (NA), glycine 286, 301–305 (KPTSS), and arginine 327.

Belongs to the chorismate synthase family. In terms of assembly, homotetramer. FMNH2 serves as cofactor.

The enzyme catalyses 5-O-(1-carboxyvinyl)-3-phosphoshikimate = chorismate + phosphate. The protein operates within metabolic intermediate biosynthesis; chorismate biosynthesis; chorismate from D-erythrose 4-phosphate and phosphoenolpyruvate: step 7/7. Its function is as follows. Catalyzes the anti-1,4-elimination of the C-3 phosphate and the C-6 proR hydrogen from 5-enolpyruvylshikimate-3-phosphate (EPSP) to yield chorismate, which is the branch point compound that serves as the starting substrate for the three terminal pathways of aromatic amino acid biosynthesis. This reaction introduces a second double bond into the aromatic ring system. The sequence is that of Chorismate synthase from Rhodospirillum centenum (strain ATCC 51521 / SW).